A 112-amino-acid polypeptide reads, in one-letter code: DNA-binding protein Bv3F (112 aa).

Residues 65–92 (KRNSKRMSTVPKYRDPATGKTWSGRGRQ) are disordered. DNA-binding regions lie at residues 89-94 (RGRQPA) and 89-95 (RGRQPAW).

The protein belongs to the histone-like protein H-NS family. In terms of assembly, homodimer that oligomerizes on DNA into higher-order complexes that form bridges between disparate regions of DNA compacting it.

It is found in the cytoplasm. The protein resides in the nucleoid. Its function is as follows. A DNA-binding protein implicated in transcriptional repression and chromosome organization and compaction. Binds in the minor groove of AT-rich DNA. Binds nucleation sites in AT-rich DNA and bridges them, forming higher-order nucleoprotein complexes and condensing the chromosome. As many horizontally transferred genes are AT-rich, it plays a central role in silencing foreign genes. This Burkholderia vietnamiensis (strain G4 / LMG 22486) (Burkholderia cepacia (strain R1808)) protein is DNA-binding protein Bv3F.